Reading from the N-terminus, the 576-residue chain is Minor capsid protein P2 (576 aa).

The segment at leucine 13–leucine 35 is hydrophobic. The disordered stretch occupies residues threonine 322–serine 348.

As to quaternary structure, interacts with the major capsid protein.

It is found in the virion. Its function is as follows. One of the minor capsid proteins that constitute a network internal to the major capsid proteins and outside the lipid membrane. The minor capsid proteins glue and stabilize the capsomers. Also acts as a molecular tape measure protein that determines the size of the viral capsid. This Chlorella (PBCV-1) protein is Minor capsid protein P2.